Reading from the N-terminus, the 87-residue chain is Sec-independent protein translocase protein TatA (87 aa).

The chain crosses the membrane as a helical span at residues 1 to 21 (MGGMSITHWIVVAVVVMIFFG). The segment at 40-87 (KKGMSEDDTTPPAAPPAPAPRLENQPLPPENTTQNVAQNVPNDIKNNQ) is disordered. The segment covering 69–87 (ENTTQNVAQNVPNDIKNNQ) has biased composition (polar residues).

Belongs to the TatA/E family. In terms of assembly, the Tat system comprises two distinct complexes: a TatABC complex, containing multiple copies of TatA, TatB and TatC subunits, and a separate TatA complex, containing only TatA subunits. Substrates initially bind to the TatABC complex, which probably triggers association of the separate TatA complex to form the active translocon.

The protein resides in the cell inner membrane. Its function is as follows. Part of the twin-arginine translocation (Tat) system that transports large folded proteins containing a characteristic twin-arginine motif in their signal peptide across membranes. TatA could form the protein-conducting channel of the Tat system. The sequence is that of Sec-independent protein translocase protein TatA from Zymomonas mobilis subsp. mobilis (strain ATCC 31821 / ZM4 / CP4).